The following is a 1486-amino-acid chain: Chromosome partition protein MukB (1486 aa).

34-41 (GGNGAGKS) provides a ligand contact to ATP. 3 coiled-coil regions span residues 326 to 418 (LEAD…QYNQ), 444 to 480 (LETF…QAYQ), and 509 to 603 (RHLA…RAPV). Positions 666–783 (PGGSEDQRLN…EVPLFGRAAR (118 aa)) are flexible hinge. Coiled-coil stretches lie at residues 835–923 (EAEI…AKLE), 977–1115 (EMLS…TAKA), and 1209–1266 (VEAI…QNVS).

This sequence belongs to the SMC family. MukB subfamily. In terms of assembly, homodimerization via its hinge domain. Binds to DNA via its C-terminal region. Interacts, and probably forms a ternary complex, with MukE and MukF via its C-terminal region. The complex formation is stimulated by calcium or magnesium. Interacts with tubulin-related protein FtsZ.

The protein resides in the cytoplasm. It localises to the nucleoid. Plays a central role in chromosome condensation, segregation and cell cycle progression. Functions as a homodimer, which is essential for chromosome partition. Involved in negative DNA supercoiling in vivo, and by this means organize and compact chromosomes. May achieve or facilitate chromosome segregation by condensation DNA from both sides of a centrally located replisome during cell division. The polypeptide is Chromosome partition protein MukB (Escherichia coli O6:K15:H31 (strain 536 / UPEC)).